The primary structure comprises 339 residues: STEAP1 protein (339 aa).

Helical transmembrane passes span 71-91 (WHLP…YTLL) and 119-139 (PMVS…AAIV). The 148-residue stretch at 118 to 265 (LPMVSITLLA…KLGIVSLLLG (148 aa)) folds into the Ferric oxidoreductase domain. Positions 140 and 161 each coordinate FAD. The next 2 membrane-spanning stretches (helical) occupy residues 164 to 184 (FGLL…SYPM) and 218 to 238 (IYVS…VTSI). H175 serves as a coordination point for heme b. FAD contacts are provided by S237 and Q254. A run of 2 helical transmembrane segments spans residues 258–278 (GIVS…NKWI) and 291–311 (FMIA…LFLP). Residue H268 coordinates heme b.

This sequence belongs to the STEAP family. Homotrimer. It depends on FAD as a cofactor. Requires heme b as cofactor. As to expression, ubiquitously expressed. Highly expressed in prostate tumors.

It is found in the endosome membrane. The protein localises to the cell membrane. Its function is as follows. Does not function as a metalloreductase due to the absence of binding sites for the electron-donating substrate NADPH. Promotes Fe(3+) reduction when fused to the NADPH-binding domain of STEAP4. The protein is STEAP1 protein (STEAP1) of Homo sapiens (Human).